The chain runs to 396 residues: Imidazolonepropionase (396 aa).

Fe(3+) contacts are provided by His-69 and His-71. Residues His-69 and His-71 each coordinate Zn(2+). 4-imidazolone-5-propanoate contacts are provided by Arg-78, Tyr-136, and His-163. Tyr-136 lines the N-formimidoyl-L-glutamate pocket. Position 224 (His-224) interacts with Fe(3+). His-224 contributes to the Zn(2+) binding site. Residue Gln-227 coordinates 4-imidazolone-5-propanoate. Asp-298 contributes to the Fe(3+) binding site. Asp-298 is a Zn(2+) binding site. N-formimidoyl-L-glutamate contacts are provided by Asn-300 and Gly-302. Thr-303 contacts 4-imidazolone-5-propanoate.

It belongs to the metallo-dependent hydrolases superfamily. HutI family. It depends on Zn(2+) as a cofactor. Fe(3+) is required as a cofactor.

Its subcellular location is the cytoplasm. It carries out the reaction 4-imidazolone-5-propanoate + H2O = N-formimidoyl-L-glutamate. It participates in amino-acid degradation; L-histidine degradation into L-glutamate; N-formimidoyl-L-glutamate from L-histidine: step 3/3. In terms of biological role, catalyzes the hydrolytic cleavage of the carbon-nitrogen bond in imidazolone-5-propanoate to yield N-formimidoyl-L-glutamate. It is the third step in the universal histidine degradation pathway. The sequence is that of Imidazolonepropionase from Cutibacterium acnes (strain DSM 16379 / KPA171202) (Propionibacterium acnes).